Here is a 158-residue protein sequence, read N- to C-terminus: Endoribonuclease YbeY (158 aa).

3 residues coordinate Zn(2+): histidine 121, histidine 125, and histidine 131.

This sequence belongs to the endoribonuclease YbeY family. Zn(2+) is required as a cofactor.

It is found in the cytoplasm. Functionally, single strand-specific metallo-endoribonuclease involved in late-stage 70S ribosome quality control and in maturation of the 3' terminus of the 16S rRNA. This chain is Endoribonuclease YbeY, found in Exiguobacterium sibiricum (strain DSM 17290 / CCUG 55495 / CIP 109462 / JCM 13490 / 255-15).